A 130-amino-acid polypeptide reads, in one-letter code: Small ribosomal subunit protein uS9 (130 aa).

The protein belongs to the universal ribosomal protein uS9 family.

In Azotobacter vinelandii (strain DJ / ATCC BAA-1303), this protein is Small ribosomal subunit protein uS9.